A 228-amino-acid chain; its full sequence is ATP synthase F(0) complex subunit a (228 aa).

5 helical membrane-spanning segments follow: residues 13-33, 69-89, 98-118, 139-159, and 194-214; these read NILA…IFPM, WALI…LGLL, QLSM…LIGL, IPTL…ALGV, and ILLF…ALVF.

It belongs to the ATPase A chain family. In terms of assembly, component of the ATP synthase complex composed at least of ATP5F1A/subunit alpha, ATP5F1B/subunit beta, ATP5MC1/subunit c (homooctomer), MT-ATP6/subunit a, MT-ATP8/subunit 8, ATP5ME/subunit e, ATP5MF/subunit f, ATP5MG/subunit g, ATP5MK/subunit k, ATP5MJ/subunit j, ATP5F1C/subunit gamma, ATP5F1D/subunit delta, ATP5F1E/subunit epsilon, ATP5PF/subunit F6, ATP5PB/subunit b, ATP5PD/subunit d, ATP5PO/subunit OSCP. ATP synthase complex consists of a soluble F(1) head domain (subunits alpha(3) and beta(3)) - the catalytic core - and a membrane F(0) domain - the membrane proton channel (subunits c, a, 8, e, f, g, k and j). These two domains are linked by a central stalk (subunits gamma, delta, and epsilon) rotating inside the F1 region and a stationary peripheral stalk (subunits F6, b, d, and OSCP). Interacts with DNAJC30; interaction is direct.

The protein resides in the mitochondrion inner membrane. It catalyses the reaction H(+)(in) = H(+)(out). In terms of biological role, subunit a, of the mitochondrial membrane ATP synthase complex (F(1)F(0) ATP synthase or Complex V) that produces ATP from ADP in the presence of a proton gradient across the membrane which is generated by electron transport complexes of the respiratory chain. ATP synthase complex consist of a soluble F(1) head domain - the catalytic core - and a membrane F(1) domain - the membrane proton channel. These two domains are linked by a central stalk rotating inside the F(1) region and a stationary peripheral stalk. During catalysis, ATP synthesis in the catalytic domain of F(1) is coupled via a rotary mechanism of the central stalk subunits to proton translocation. With the subunit c (ATP5MC1), forms the proton-conducting channel in the F(0) domain, that contains two crucial half-channels (inlet and outlet) that facilitate proton movement from the mitochondrial intermembrane space (IMS) into the matrix. Protons are taken up via the inlet half-channel and released through the outlet half-channel, following a Grotthuss mechanism. In Pelomedusa subrufa (African side-necked turtle), this protein is ATP synthase F(0) complex subunit a.